A 150-amino-acid polypeptide reads, in one-letter code: Ribonuclease HI (150 aa).

Residues 1–141 (MKLINAYTDG…VDVLARGQAM (141 aa)) form the RNase H type-1 domain. The Mg(2+) site is built by Asp9, Glu47, Asp69, and Asp133.

Belongs to the RNase H family. Monomer. Mg(2+) serves as cofactor.

The protein localises to the cytoplasm. It carries out the reaction Endonucleolytic cleavage to 5'-phosphomonoester.. Functionally, endonuclease that specifically degrades the RNA of RNA-DNA hybrids. This chain is Ribonuclease HI, found in Xylella fastidiosa (strain Temecula1 / ATCC 700964).